The primary structure comprises 736 residues: Poly(A) polymerase gamma (736 aa).

Residue Lys-2 is modified to N6-acetyllysine. Ser-23 and Ser-29 each carry phosphoserine. ATP contacts are provided by residues 99–101 (FGS), Thr-108, 112–114 (DID), Asp-166, Lys-227, Tyr-236, and 245–246 (GV). The Mg(2+) site is built by Asp-112, Asp-114, and Asp-166. Residues 506-564 (KQSLSDVNRSSGGLQSKRLSLDSSCLDSSRDTDNGTPFNSPASKSDSPSVGETERNSAE) are disordered. The segment covering 509–519 (LSDVNRSSGGL) has biased composition (polar residues). Low complexity predominate over residues 521-532 (SKRLSLDSSCLD). A Phosphoserine modification is found at Ser-525. Over residues 539–555 (NGTPFNSPASKSDSPSV) the composition is skewed to polar residues. Ser-599 and Ser-648 each carry phosphoserine. Thr-654 bears the Phosphothreonine mark. The segment covering 673-685 (DPRTAEERKRKSV) has biased composition (basic and acidic residues). The tract at residues 673–720 (DPRTAEERKRKSVDAIGGESMPIPTIDTSRKKRLPSKELPDSSSPVPA) is disordered. 2 positions are modified to phosphoserine: Ser-684 and Ser-708.

It belongs to the poly(A) polymerase family. Mg(2+) is required as a cofactor. Requires Mn(2+) as cofactor. In terms of tissue distribution, expressed predominantly in testis, and weakly in other tissues. Overexpressed in several tumors.

The protein localises to the nucleus. It catalyses the reaction RNA(n) + ATP = RNA(n)-3'-adenine ribonucleotide + diphosphate. In terms of biological role, responsible for the post-transcriptional adenylation of the 3'-terminal of mRNA precursors and several small RNAs including signal recognition particle (SRP) RNA, nuclear 7SK RNA, U2 small nuclear RNA, and ribosomal 5S RNA. The protein is Poly(A) polymerase gamma of Homo sapiens (Human).